The sequence spans 316 residues: Exonuclease DPD1, chloroplastic/mitochondrial (316 aa).

The N-terminal 63 residues, 1 to 63, are a transit peptide targeting the chloroplast and mitochondrion; sequence MCISISQVSR…NVSTTTQGSR (63 aa). The Exonuclease domain maps to 112-282; that stretch reads IVSDLETTGL…SDVLLLSKVF (171 aa). Mg(2+) is bound by residues Asp-115 and Glu-117. Catalysis depends on His-269, which acts as the Proton donor/acceptor. Residue Asp-274 participates in Mg(2+) binding.

Belongs to the exonuclease superfamily. TREX family. The cofactor is Mg(2+). Highly expressed in mature pollen grains. Detected in flowers, senescing leaves and roots.

Its subcellular location is the plastid. The protein resides in the chloroplast. It localises to the mitochondrion. With respect to regulation, inhibited by free nucleotide diphosphates (NDPs). In terms of biological role, exonuclease required for organelle DNA degradation during pollen development. Plays non-essential roles in maternal inheritance. May be part of the DNA salvage machinery. The chain is Exonuclease DPD1, chloroplastic/mitochondrial from Arabidopsis thaliana (Mouse-ear cress).